A 375-amino-acid chain; its full sequence is Enoyl-[acyl-carrier-protein] reductase, mitochondrial (375 aa).

Residues 1–37 constitute a mitochondrion transit peptide; sequence MAALMESVVGRALKFSSTANFRSIRRGETPTLCIKSF. Y96 (proton donor) is an active-site residue. NADP(+) is bound by residues N169, 195 to 198, 218 to 220, 287 to 290, 312 to 314, and K370; these read TSIV, RDR, YGGM, and FWL.

Belongs to the zinc-containing alcohol dehydrogenase family. Quinone oxidoreductase subfamily. In terms of assembly, homodimer.

Its subcellular location is the mitochondrion. The catalysed reaction is a 2,3-saturated acyl-[ACP] + NADP(+) = a (2E)-enoyl-[ACP] + NADPH + H(+). Catalyzes the NADPH-dependent reduction of trans-2-enoyl thioesters in mitochondrial fatty acid synthesis (fatty acid synthesis type II). Fatty acid chain elongation in mitochondria uses acyl carrier protein (ACP) as an acyl group carrier, but the enzyme accepts both ACP and CoA thioesters as substrates in vitro. The polypeptide is Enoyl-[acyl-carrier-protein] reductase, mitochondrial (Arabidopsis thaliana (Mouse-ear cress)).